A 92-amino-acid chain; its full sequence is UPF0223 protein SP_1404 (92 aa).

It belongs to the UPF0223 family.

The polypeptide is UPF0223 protein SP_1404 (Streptococcus pneumoniae serotype 4 (strain ATCC BAA-334 / TIGR4)).